A 426-amino-acid chain; its full sequence is COMPASS component SWD1 (426 aa).

WD repeat units lie at residues 24–63 (ENPLRTECLQFSPCGDYLALGCANGALVIYDMDTFRPICV), 70–109 (AHVRPITSIAWSPDGRLLLTSSRDWSIKLWDLSKPSKPLK), 212–251 (ITSSNIKHLIVSQNGERLAINCSDRTIRQYEISIDDENSA), 264–307 (INKL…LVRV), and 310–350 (GAEE…KWSA). DNA-binding residues include Arg236 and Lys266.

In terms of assembly, component of the Set1C/COMPASS complex which consists of SET1(2), BRE2(2), SPP1(2), SDC1(1), SHG1(1), SWD1(1), SWD2(1), and SWD3(1).

The protein resides in the nucleus. The protein localises to the chromosome. It localises to the telomere. Its function is as follows. Component of the Set1C/COMPASS complex that specifically mono-, di- and trimethylates histone H3 to form H3K4me1/2/3, which subsequently plays a role in telomere length maintenance and transcription elongation regulation. COMPASS recognizes ubiquitinated H2B on one face of the nucleosome which stimulates the methylation of H3 on the opposing face. SWD1/CPS50 acts as an assembly and regulatory hub for COMPASS complex formation. Serves as a highly utilized surface for COMPASS interaction with the nucleosome. In Saccharomyces cerevisiae (strain ATCC 204508 / S288c) (Baker's yeast), this protein is COMPASS component SWD1.